The primary structure comprises 79 residues: Sulfur carrier protein TusA (79 aa).

Cys17 (cysteine persulfide intermediate) is an active-site residue.

This sequence belongs to the sulfur carrier protein TusA family.

The protein resides in the cytoplasm. Functionally, sulfur carrier protein which probably makes part of a sulfur-relay system. The polypeptide is Sulfur carrier protein TusA (Haemophilus influenzae (strain PittEE)).